The following is a 642-amino-acid chain: Cysteine-rich receptor-like protein kinase 27 (642 aa).

Residues 1 to 24 (MASTSIMLSSFFSFFFLTFFVTYA) form the signal peptide. The Extracellular portion of the chain corresponds to 25–274 (QQNVTVHTIC…QGKSKDRSKT (250 aa)). Asparagine 27, asparagine 40, asparagine 44, asparagine 70, asparagine 145, asparagine 173, and asparagine 258 each carry an N-linked (GlcNAc...) asparagine glycan. 2 Gnk2-homologous domains span residues 29 to 130 (TVHT…SRII) and 136 to 240 (PVPF…VYPF). The chain crosses the membrane as a helical span at residues 275–295 (LIFAVVPIVAIILGLVFLFIY). At 296 to 642 (LKRRRKKKTL…DVSLTDLSAR (347 aa)) the chain is on the cytoplasmic side. The Protein kinase domain occupies 333–620 (FSLTNKIGEG…QLPKPSQPGF (288 aa)). ATP-binding positions include 339-347 (IGEGGFGVV) and lysine 361. Phosphotyrosine is present on tyrosine 406. The Proton acceptor role is filled by aspartate 458. Serine 462 is subject to Phosphoserine. At threonine 498 the chain carries Phosphothreonine. At tyrosine 506 the chain carries Phosphotyrosine.

This sequence belongs to the protein kinase superfamily. Ser/Thr protein kinase family. CRK subfamily.

It localises to the membrane. It carries out the reaction L-seryl-[protein] + ATP = O-phospho-L-seryl-[protein] + ADP + H(+). The catalysed reaction is L-threonyl-[protein] + ATP = O-phospho-L-threonyl-[protein] + ADP + H(+). The chain is Cysteine-rich receptor-like protein kinase 27 (CRK27) from Arabidopsis thaliana (Mouse-ear cress).